We begin with the raw amino-acid sequence, 409 residues long: Major capsid protein (409 aa).

Belongs to the lambda phage major capsid protein family. As to quaternary structure, homomultimer. Interacts with the portal protein. Interacts with the decoration protein.

It is found in the virion. Its subcellular location is the host cytoplasm. Functionally, assembles to form an icosahedric capsid shell with a T=7 symmetry although with a diameter of about 82 nm, which is a larger volume than the usual T=7 capsids. A dramatic reconfiguration of the capsid shell that expands the procaspid from a diameter of 66 nm to a supersized capsid of 82 nm, allows packaging of the large viral DNA genome. The capsid decoration protein binds the expanded capsid and stabilizes it. The chain is Major capsid protein from Thermus virus P23-45 (Thermus thermophilus phage P23-45).